A 76-amino-acid chain; its full sequence is Sec-independent protein translocase protein TatA (76 aa).

A helical transmembrane segment spans residues 1–21 (MGSFSIWHWLVVLAIVVLVFG). Positions 41–76 (EGMKGAEEESTPPPPAQQVTGHSIKSEIEEKDQTKV) are disordered. Residues 64-76 (IKSEIEEKDQTKV) are compositionally biased toward basic and acidic residues.

This sequence belongs to the TatA/E family. As to quaternary structure, the Tat system comprises two distinct complexes: a TatABC complex, containing multiple copies of TatA, TatB and TatC subunits, and a separate TatA complex, containing only TatA subunits. Substrates initially bind to the TatABC complex, which probably triggers association of the separate TatA complex to form the active translocon.

It is found in the cell inner membrane. Its function is as follows. Part of the twin-arginine translocation (Tat) system that transports large folded proteins containing a characteristic twin-arginine motif in their signal peptide across membranes. TatA could form the protein-conducting channel of the Tat system. The chain is Sec-independent protein translocase protein TatA from Nitrosomonas europaea (strain ATCC 19718 / CIP 103999 / KCTC 2705 / NBRC 14298).